The sequence spans 201 residues: Cell division protein SepF (201 aa).

Residues 27–38 (VQERTSVQRDSR) show a composition bias toward basic and acidic residues. The segment at 27–99 (VQERTSVQRD…PRVQNKDSVR (73 aa)) is disordered. Positions 43–54 (QEASQRSHMTNS) are enriched in polar residues. Basic and acidic residues predominate over residues 72 to 81 (NRQERQRVQR). The span at 83–92 (NAYQQATPRV) shows a compositional bias: polar residues.

Belongs to the SepF family. As to quaternary structure, homodimer. Interacts with FtsZ.

It is found in the cytoplasm. Functionally, cell division protein that is part of the divisome complex and is recruited early to the Z-ring. Probably stimulates Z-ring formation, perhaps through the cross-linking of FtsZ protofilaments. Its function overlaps with FtsA. The chain is Cell division protein SepF from Streptococcus agalactiae serotype V (strain ATCC BAA-611 / 2603 V/R).